The sequence spans 317 residues: WSCD family member AAEL009094 (317 aa).

A helical transmembrane segment spans residues 8–28; that stretch reads LFGLAGTILVYIGGILFLSFV. N-linked (GlcNAc...) asparagine glycosylation is found at asparagine 150, asparagine 226, and asparagine 232.

The protein belongs to the WSCD family.

The protein localises to the membrane. This Aedes aegypti (Yellowfever mosquito) protein is WSCD family member AAEL009094.